The primary structure comprises 261 residues: tRNA pseudouridine synthase A (261 aa).

Catalysis depends on Asp-51, which acts as the Nucleophile. Position 109 (Tyr-109) interacts with substrate.

It belongs to the tRNA pseudouridine synthase TruA family. In terms of assembly, homodimer.

It catalyses the reaction uridine(38/39/40) in tRNA = pseudouridine(38/39/40) in tRNA. Formation of pseudouridine at positions 38, 39 and 40 in the anticodon stem and loop of transfer RNAs. The sequence is that of tRNA pseudouridine synthase A from Photobacterium profundum (strain SS9).